We begin with the raw amino-acid sequence, 669 residues long: DNA ligase (669 aa).

35–39 (DFEYD) is a binding site for NAD(+). The segment at 52–71 (YPEWDSPDSPTHRVGSDKTE) is disordered. Residues 61–71 (PTHRVGSDKTE) are compositionally biased toward basic and acidic residues. NAD(+)-binding positions include 84–85 (SL) and glutamate 115. The active-site N6-AMP-lysine intermediate is the lysine 117. Residues arginine 138, glutamate 175, lysine 290, and lysine 314 each coordinate NAD(+). Positions 408, 411, 426, and 432 each coordinate Zn(2+). Residues 590–669 (AVSNRLAGKT…EEEFLRLIEE (80 aa)) enclose the BRCT domain.

Belongs to the NAD-dependent DNA ligase family. LigA subfamily. Mg(2+) serves as cofactor. Requires Mn(2+) as cofactor.

It catalyses the reaction NAD(+) + (deoxyribonucleotide)n-3'-hydroxyl + 5'-phospho-(deoxyribonucleotide)m = (deoxyribonucleotide)n+m + AMP + beta-nicotinamide D-nucleotide.. Its function is as follows. DNA ligase that catalyzes the formation of phosphodiester linkages between 5'-phosphoryl and 3'-hydroxyl groups in double-stranded DNA using NAD as a coenzyme and as the energy source for the reaction. It is essential for DNA replication and repair of damaged DNA. In Porphyromonas gingivalis (strain ATCC BAA-308 / W83), this protein is DNA ligase.